Here is a 189-residue protein sequence, read N- to C-terminus: Movement protein (189 aa).

Belongs to the tombusvirus/aureusvirus movement protein p22 family. As to quaternary structure, interacts with host protein HFI22. Post-translationally, phosphorylated.

The protein resides in the host membrane. In terms of biological role, transports viral genome to neighboring plant cells directly through plasmosdesmata, without any budding. The movement protein allows efficient cell to cell propagation, by bypassing the host cell wall barrier. The sequence is that of Movement protein from Capsicum annuum (Capsicum pepper).